Consider the following 145-residue polypeptide: Large ribosomal subunit protein uL16 (145 aa).

The protein belongs to the universal ribosomal protein uL16 family. As to quaternary structure, part of the 50S ribosomal subunit.

Binds 23S rRNA and is also seen to make contacts with the A and possibly P site tRNAs. The polypeptide is Large ribosomal subunit protein uL16 (Desulfitobacterium hafniense (strain DSM 10664 / DCB-2)).